The following is a 2325-amino-acid chain: Protein Ycf2 (2325 aa).

3 disordered regions span residues 168 to 189 (SSQLKGSSDQSRDHFDSIGTED), 221 to 251 (TEIESDRFSKGLSGSSSKSRLFTEGEKEMNN), and 947 to 1006 (KRKK…KRKE). The segment covering 230-240 (KGLSGSSSKSR) has biased composition (low complexity). 2 stretches are compositionally biased toward basic and acidic residues: residues 241 to 250 (LFTEGEKEMN) and 955 to 1004 (KRKE…PEKR). 1436–1443 (GSIGSGRS) is an ATP binding site. 3 disordered regions span residues 1510–1529 (YEDRDSDDYDEPGASDDYEP), 1855–1996 (LVGS…LLRP), and 2063–2179 (PAEE…DGFS). Residues 1861-1976 (TEEEVEGTEE…VEGTEDEEGE (116 aa)) show a composition bias toward acidic residues. Residues 1977–1989 (GTEKDSSQFDNDR) are compositionally biased toward basic and acidic residues. 2 stretches are compositionally biased toward acidic residues: residues 2063 to 2080 (PAEEIPEEEDPLPEEALE) and 2087 to 2162 (GEEE…ENDS).

Belongs to the Ycf2 family.

The protein resides in the plastid. It localises to the chloroplast stroma. In terms of biological role, probable ATPase of unknown function. Its presence in a non-photosynthetic plant (Epifagus virginiana) and experiments in tobacco indicate that it has an essential function which is probably not related to photosynthesis. The protein is Protein Ycf2 of Oenothera biennis (German evening primrose).